Here is a 502-residue protein sequence, read N- to C-terminus: Hexokinase-2 (502 aa).

A helical transmembrane segment spans residues 4-24 (VAVATTVVCSVAVCAAAALIV). A Hexokinase domain is found at 35-487 (ARVIEILKAF…SGVGAALLAA (453 aa)). The segment at 90–228 (SGDETGFFYA…GLDMLVAALV (139 aa)) is hexokinase small subdomain. The ADP site is built by G104, T105, and N106. Residues T194, K195, N229, and D230 each coordinate D-glucose. Positions 229-476 (NDTIGTLAGG…ESVEVILSND (248 aa)) are hexokinase large subdomain. An ADP-binding site is contributed by T253. Residues N256, E284, and E315 each coordinate D-glucose. G441 is an ADP binding site.

It belongs to the hexokinase family. As to expression, highly expressed in siliques, at intermediate levels in roots and flowers, and at lower levels in stems, rosette and cauline leaves.

It localises to the mitochondrion outer membrane. The enzyme catalyses a D-hexose + ATP = a D-hexose 6-phosphate + ADP + H(+). The catalysed reaction is D-fructose + ATP = D-fructose 6-phosphate + ADP + H(+). It carries out the reaction D-glucose + ATP = D-glucose 6-phosphate + ADP + H(+). It functions in the pathway carbohydrate metabolism; hexose metabolism. Its pathway is carbohydrate degradation; glycolysis; D-glyceraldehyde 3-phosphate and glycerone phosphate from D-glucose: step 1/4. In terms of biological role, fructose and glucose phosphorylating enzyme. May be involved in the phosphorylation of glucose during the export from mitochondrion to cytosol. Acts as a sugar sensor which may regulate sugar-dependent gene repression or activation. Mediates the effects of sugar on plant growth and development independently of its catalytic activity or the sugar metabolism. May regulate the execution of program cell death in plant cells. This Arabidopsis thaliana (Mouse-ear cress) protein is Hexokinase-2 (HXK2).